The primary structure comprises 290 residues: 4-hydroxy-tetrahydrodipicolinate synthase (290 aa).

Thr-45 is a pyruvate binding site. The active-site Proton donor/acceptor is Tyr-133. Residue Lys-161 is the Schiff-base intermediate with substrate of the active site. Ile-202 contacts pyruvate.

The protein belongs to the DapA family. In terms of assembly, homotetramer; dimer of dimers.

The protein localises to the cytoplasm. The enzyme catalyses L-aspartate 4-semialdehyde + pyruvate = (2S,4S)-4-hydroxy-2,3,4,5-tetrahydrodipicolinate + H2O + H(+). It participates in amino-acid biosynthesis; L-lysine biosynthesis via DAP pathway; (S)-tetrahydrodipicolinate from L-aspartate: step 3/4. Its function is as follows. Catalyzes the condensation of (S)-aspartate-beta-semialdehyde [(S)-ASA] and pyruvate to 4-hydroxy-tetrahydrodipicolinate (HTPA). The protein is 4-hydroxy-tetrahydrodipicolinate synthase of Alkalilimnicola ehrlichii (strain ATCC BAA-1101 / DSM 17681 / MLHE-1).